Consider the following 219-residue polypeptide: Cytidylate kinase (219 aa).

Residue G21–T29 participates in ATP binding.

This sequence belongs to the cytidylate kinase family. Type 1 subfamily.

The protein resides in the cytoplasm. The enzyme catalyses CMP + ATP = CDP + ADP. It catalyses the reaction dCMP + ATP = dCDP + ADP. This chain is Cytidylate kinase, found in Rickettsia felis (strain ATCC VR-1525 / URRWXCal2) (Rickettsia azadi).